The sequence spans 970 residues: Type III restriction-modification enzyme EcoPI Res subunit (970 aa).

The helicase-like domain stretch occupies residues 75 to 540 (ARSNVIDVSM…EVGRGLRLPV (466 aa)). The tract at residues 894–918 (TYSPDFAYVVKTAEGDYLNFIIETK) is endonuclease domain.

It belongs to the type III restriction-modification system Res protein family. As to quaternary structure, a heterotetramer with stoichiometry Res(2)Mod(2). The cofactor is Mg(2+). It depends on S-adenosyl-L-methionine as a cofactor.

It carries out the reaction Endonucleolytic cleavage of DNA to give specific double-stranded fragments with terminal 5'-phosphates.. Its function is as follows. A type III restriction enzyme that recognizes 2 inversely oriented double-stranded sequences 5'-AGACC-3' and cleaves DNA 25-27 base pairs downstream of one site, producing a single-strand 5' protrusion of two nucleotides. DNA restriction requires both the Res and Mod subunits. DNA topology affects its action; relaxed and negatively supercoiled DNA are digested but positively supercoiled DNA is not a good substrate. After binding to one recognition site undergoes random one-dimensional diffusion along DNA until it collides with a stationary enzyme bound to the second DNA site, which is when DNA cleavage occurs. This is Type III restriction-modification enzyme EcoPI Res subunit from Enterobacteriaceae (Bacteriophage P1).